Consider the following 410-residue polypeptide: Platelet-activating factor acetylhydrolase IB subunit beta (410 aa).

The required for self-association and interaction with PAFAH1B2 and PAFAH1B3 stretch occupies residues 1–38 (MVLSQRQRDELNRAIADYLRSNGYEEAYSVFKKEAELD). Residues 1–66 (MVLSQRQRDE…SVIRLQKKVM (66 aa)) are interaction with NDE1. An interaction with NDEL1 region spans residues 1 to 102 (MVLSQRQRDE…EWIPRPPEKY (102 aa)). Positions 7–39 (QRDELNRAIADYLRSNGYEEAYSVFKKEAELDM) constitute a LisH domain. At lysine 53 the chain carries N6-acetyllysine. Residues 56 to 82 (TSVIRLQKKVMELESKLNEAKEEFTSG) are a coiled coil. An interaction with dynein and dynactin region spans residues 83–410 (GPLGQKRDPK…DQTVKVWECR (328 aa)). WD repeat units lie at residues 106-147 (GHRS…RTLK), 148-187 (GHTD…CIRT), 190-229 (GHDH…CVKT), 232-271 (GHRE…CKAE), 274-333 (EHEH…CLMT), 336-377 (GHDN…KTLN), and 378-410 (AHEH…WECR). Serine 109 carries the post-translational modification Phosphoserine. An interaction with DCX region spans residues 367 to 409 (YKNKRCMKTLNAHEHFVTSLDFHKTAPYVVTGSVDQTVKVWEC). Positions 388 to 410 (FHKTAPYVVTGSVDQTVKVWECR) are interaction with NDEL1.

Belongs to the WD repeat LIS1/nudF family. Can self-associate. Component of the cytosolic PAF-AH (I) heterotetrameric enzyme, which is composed of PAFAH1B1 (beta), PAFAH1B2 (alpha2) and PAFAH1B3 (alpha1) subunits. The catalytic activity of the enzyme resides in the alpha1 (PAFAH1B3) and alpha2 (PAFAH1B2) subunits, whereas the beta subunit (PAFAH1B1) has regulatory activity. Trimer formation is not essential for the catalytic activity. Interacts with the catalytic dimer of PAF-AH (I) heterotetrameric enzyme: interacts with PAFAH1B2 homodimer (alpha2/alpha2 homodimer), PAFAH1B3 homodimer (alpha1/alpha1 homodimer) and PAFAH1B2-PAFAH1B3 heterodimer (alpha2/alpha1 heterodimer). Interacts with DCX, dynein, dynactin, IQGAP1, KATNB1, NDE1, NDEL1, NUDC and RSN. Interacts with DISC1, and this interaction is enhanced by NDEL1. Interacts with DAB1 when DAB1 is phosphorylated in response to RELN/reelin signaling. Interacts with INTS13. Interacts with DCDC1.

The protein localises to the cytoplasm. It is found in the cytoskeleton. The protein resides in the microtubule organizing center. It localises to the centrosome. Its subcellular location is the spindle. The protein localises to the nucleus membrane. Regulatory subunit (beta subunit) of the cytosolic type I platelet-activating factor (PAF) acetylhydrolase (PAF-AH (I)), an enzyme that catalyzes the hydrolyze of the acetyl group at the sn-2 position of PAF and its analogs and participates in PAF inactivation. Regulates the PAF-AH (I) activity in a catalytic dimer composition-dependent manner. Positively regulates the activity of the minus-end directed microtubule motor protein dynein. May enhance dynein-mediated microtubule sliding by targeting dynein to the microtubule plus end. Required for several dynein- and microtubule-dependent processes such as the maintenance of Golgi integrity, the peripheral transport of microtubule fragments and the coupling of the nucleus and centrosome. Required during brain development for the proliferation of neuronal precursors and the migration of newly formed neurons from the ventricular/subventricular zone toward the cortical plate. Neuronal migration involves a process called nucleokinesis, whereby migrating cells extend an anterior process into which the nucleus subsequently translocates. During nucleokinesis dynein at the nuclear surface may translocate the nucleus towards the centrosome by exerting force on centrosomal microtubules. Also required for proper activation of Rho GTPases and actin polymerization at the leading edge of locomoting cerebellar neurons and postmigratory hippocampal neurons in response to calcium influx triggered via NMDA receptors. May also play a role in other forms of cell locomotion including the migration of fibroblasts during wound healing. Required for dynein recruitment to microtubule plus ends and BICD2-bound cargos. May modulate the Reelin pathway through interaction of the PAF-AH (I) catalytic dimer with VLDLR. This chain is Platelet-activating factor acetylhydrolase IB subunit beta, found in Felis catus (Cat).